Consider the following 501-residue polypeptide: Armadillo repeat-containing protein 6 (501 aa).

Ser64 is modified (phosphoserine). ARM repeat units lie at residues 220 to 264, 274 to 318, 319 to 369, and 370 to 412; these read GVLP…HAHN, KGLK…DLGG, LSIL…RAGG, and TESI…VEGG. His263 is subject to Pros-methylhistidine.

Belongs to the ARMC6 family. Methylated at His-263 by METTL9.

In Homo sapiens (Human), this protein is Armadillo repeat-containing protein 6 (ARMC6).